We begin with the raw amino-acid sequence, 443 residues long: Phosphoglucosamine mutase (443 aa).

Ser100 (phosphoserine intermediate) is an active-site residue. Positions 100, 240, 242, and 244 each coordinate Mg(2+). At Ser100 the chain carries Phosphoserine.

This sequence belongs to the phosphohexose mutase family. The cofactor is Mg(2+). Activated by phosphorylation.

It catalyses the reaction alpha-D-glucosamine 1-phosphate = D-glucosamine 6-phosphate. Catalyzes the conversion of glucosamine-6-phosphate to glucosamine-1-phosphate. In Carboxydothermus hydrogenoformans (strain ATCC BAA-161 / DSM 6008 / Z-2901), this protein is Phosphoglucosamine mutase.